The sequence spans 260 residues: O-antigen export system permease protein RfbA (260 aa).

Helical transmembrane passes span 31-51, 63-83, 109-129, 139-159, 173-193, 201-221, and 229-249; these read FLGF…YVLL, FPFF…SVGG, VVVT…VLGM, VVLF…LTYI, IVSN…PLST, SLML…AIFY, and EPLM…SSIF. Residues 32–252 enclose the ABC transmembrane type-2 domain; it reads LGFLWTFLNP…WAASSIFESR (221 aa).

Belongs to the ABC-2 integral membrane protein family.

The protein resides in the cell inner membrane. Functionally, may form an ATP-driven O-antigen export apparatus, in association with RfbB. The polypeptide is O-antigen export system permease protein RfbA (rfbA) (Myxococcus xanthus).